The sequence spans 268 residues: Esterase GME11355 (268 aa).

Catalysis depends on charge relay system residues Ser-122, Asp-212, and His-240.

Belongs to the LovG family.

It functions in the pathway secondary metabolite biosynthesis. In terms of biological role, esterase; part of the gene cluster that mediates the biosynthesis of dibenzodioxocinones such as pestalotiollide B, a novel class of inhibitors against cholesterol ester transfer protein (CEPT). The biosynthesis initiates from condensation of acetate and malonate units catalyzed by the non-reducing PKS pks8/GME11356. Pks8/GME11356 lacks a thioesterase (TE) domain, which is important to the cyclizing of the third ring of atrochrysone carboxylic acid, and the esterase GME11355 might play the role of TE and catalyzes the cyclization reaction of the C ring. The lactamase-like protein GME11357 (or other beta-lactamases in Pestalotiopsis microspora) probably hydrolyzes the thioester bond between the ACP of pks8/GME11356 and the intermediate to release atrochrysone carboxylic acid, which is spontaneously dehydrates to form endocrocin anthrone. Endocrocin anthrone is further converted to emodin via the endocrocin intermediate. Emodin is then oxidized by several enzymes such as the Baeyer-Villiger oxidase GME11358, the oxidoreductase GME11367, the short chain dehydrogenase/reductase GME11373, as well as by other oxidoreductases from the cluster, to modify the A and C rings and open the B ring, and finally yield monodictyphenone. The prenyltransferase GME11375 may catalyze the addition reaction between the C5 side chains and the carbon bone of dibenzodioxocinones. The remaining biochemical reactions to the final product dibenzodioxocinones should be methylation catalyzed by methyltransferase GME11366 and reduction and lactonization reaction catalyzed by a series of oxidordeuctases. In Pestalotiopsis microspora, this protein is Esterase GME11355.